Reading from the N-terminus, the 240-residue chain is Ribose-5-phosphate isomerase A (240 aa).

Residues 1 to 23 (MKTSGGSDAAKRRAGESAAETVT) are disordered. Residues 32-35 (TGST), 92-95 (DGAD), and 111-114 (KGGG) each bind substrate. The active-site Proton acceptor is E120. Residue K138 coordinates substrate.

The protein belongs to the ribose 5-phosphate isomerase family. As to quaternary structure, homodimer.

The enzyme catalyses aldehydo-D-ribose 5-phosphate = D-ribulose 5-phosphate. It participates in carbohydrate degradation; pentose phosphate pathway; D-ribose 5-phosphate from D-ribulose 5-phosphate (non-oxidative stage): step 1/1. In terms of biological role, catalyzes the reversible conversion of ribose-5-phosphate to ribulose 5-phosphate. This is Ribose-5-phosphate isomerase A from Halorubrum lacusprofundi (strain ATCC 49239 / DSM 5036 / JCM 8891 / ACAM 34).